We begin with the raw amino-acid sequence, 384 residues long: GDSL esterase/lipase At1g28670 (384 aa).

Positions 1 to 24 (MASSLKKLISSFLLVLYSTTIIVA) are cleaved as a signal peptide. Residue serine 42 is the Nucleophile of the active site. Asparagine 105, asparagine 138, and asparagine 321 each carry an N-linked (GlcNAc...) asparagine glycan. Residues aspartate 346 and histidine 349 contribute to the active site.

This sequence belongs to the 'GDSL' lipolytic enzyme family.

It is found in the secreted. The protein is GDSL esterase/lipase At1g28670 of Arabidopsis thaliana (Mouse-ear cress).